The sequence spans 213 residues: N-(5'-phosphoribosyl)anthranilate isomerase (213 aa).

The protein belongs to the TrpF family.

The catalysed reaction is N-(5-phospho-beta-D-ribosyl)anthranilate = 1-(2-carboxyphenylamino)-1-deoxy-D-ribulose 5-phosphate. It participates in amino-acid biosynthesis; L-tryptophan biosynthesis; L-tryptophan from chorismate: step 3/5. In Rhodopseudomonas palustris (strain TIE-1), this protein is N-(5'-phosphoribosyl)anthranilate isomerase.